Here is an 881-residue protein sequence, read N- to C-terminus: Protein translocase subunit SecA (881 aa).

ATP-binding positions include Gln-83, 101–105 (GEGKT), and Asp-492.

Belongs to the SecA family.

It localises to the plastid. Its subcellular location is the chloroplast stroma. The protein resides in the chloroplast thylakoid membrane. The enzyme catalyses ATP + H2O + cellular proteinSide 1 = ADP + phosphate + cellular proteinSide 2.. In terms of biological role, has a central role in coupling the hydrolysis of ATP to the transfer of proteins across the thylakoid membrane. The sequence is that of Protein translocase subunit SecA from Emiliania huxleyi (Coccolithophore).